We begin with the raw amino-acid sequence, 256 residues long: MAVGKNKRLSKGKKGIKKRTVDPFTRKDEYSVKAPSTFANRDVGKTLVNRTSGLKNANDSLKGRIFEVSLADLQGDEDHAFRKVKLRVDEIQGKNCLTNFHGLDFTTDKLRSLVRKWQSLIEANVTVKTTDDYLLRLFAIAFTKRRPNQIKKTTYARSSQIRAIRKKMTEIMQREASSCSLAQLTSKLIPEVIGREIEKATQGIYPLQHVHIRKVKLLKSPKFDLGALLNLHGESTTDDKGQKVEREFKEQVLESV.

Positions M1 to K18 are enriched in basic residues. A disordered region spans residues M1–T20. N-acetylalanine; partial is present on A2.

It belongs to the eukaryotic ribosomal protein eS1 family. Component of the small ribosomal subunit. Mature ribosomes consist of a small (40S) and a large (60S) subunit. The 40S subunit contains about 33 different proteins and 1 molecule of RNA (18S). The 60S subunit contains about 49 different proteins and 3 molecules of RNA (25S, 5.8S and 5S).

The protein localises to the cytoplasm. The polypeptide is Small ribosomal subunit protein eS1 (rps1) (Emericella nidulans (strain FGSC A4 / ATCC 38163 / CBS 112.46 / NRRL 194 / M139) (Aspergillus nidulans)).